Here is a 547-residue protein sequence, read N- to C-terminus: Ganoderic acid synthetase CYP5150L8 (547 aa).

A helical membrane pass occupies residues 2–22; it reads PDSSLVLVAIAGAAYIFWLVF. Heme is bound at residue Cys487.

The protein belongs to the cytochrome P450 family. Heme is required as a cofactor.

The protein localises to the membrane. The catalysed reaction is lanosterol + reduced [NADPH--hemoprotein reductase] + O2 = 26-hydroxylanosterol + oxidized [NADPH--hemoprotein reductase] + H2O + H(+). The enzyme catalyses 26-hydroxylanosterol + reduced [NADPH--hemoprotein reductase] + O2 = 26-oxolanosterol + oxidized [NADPH--hemoprotein reductase] + 2 H2O + H(+). It catalyses the reaction 26-oxolanosterol + reduced [NADPH--hemoprotein reductase] + O2 = 3beta-hydroxy-lanosta-8, 24-dien-26-oate + oxidized [NADPH--hemoprotein reductase] + H2O + 2 H(+). The protein operates within secondary metabolite biosynthesis; terpenoid biosynthesis. Functionally, cytochrome P450 monooxygenase that is involved in the biosynthesis of ganoderic acids (GA), a group of highly oxygenated lanostane-type triterpenoids which well recognized as a main group of unique bioactive compounds in the medicinal mushroom Ganoderma lucidum. CYP5150L8 alone is able to catalyze the three-step oxidations at C-26 from lanosterol to 3-hydroxy-lanosta-8,24-dien-26-oic acid (also called ganoderic acid Z or HLDOA). The methyl group of lanosterol at C-26 is first oxidized into hydroxyl group to form 3-hydroxy-lanosta-8,24-dien-26-ol (HLDO). The hydroxyl group at C-26 of HLDO is further converted into a formyl group to form 3-hydroxy-lanosta-8,24-dien-26-al (HLDA). Finally, the formyl group is oxidized into a carboxyl group to produce 3-hydroxy-lanosta-8,24-dien-26-oic acid (HLDOA). The protein is Ganoderic acid synthetase CYP5150L8 of Ganoderma lucidum (Ling zhi medicinal fungus).